A 195-amino-acid polypeptide reads, in one-letter code: Large ribosomal subunit protein uL5 (195 aa).

The protein belongs to the universal ribosomal protein uL5 family. Part of the 50S ribosomal subunit; part of the 5S rRNA/L5/L18/L25 subcomplex. Contacts the 5S rRNA and the P site tRNA. Forms a bridge to the 30S subunit in the 70S ribosome.

This is one of the proteins that bind and probably mediate the attachment of the 5S RNA into the large ribosomal subunit, where it forms part of the central protuberance. In the 70S ribosome it contacts protein S13 of the 30S subunit (bridge B1b), connecting the 2 subunits; this bridge is implicated in subunit movement. Contacts the P site tRNA; the 5S rRNA and some of its associated proteins might help stabilize positioning of ribosome-bound tRNAs. This is Large ribosomal subunit protein uL5 from Pelodictyon phaeoclathratiforme (strain DSM 5477 / BU-1).